The primary structure comprises 299 residues: 4-hydroxybenzoate octaprenyltransferase (299 aa).

8 helical membrane-spanning segments follow: residues 33–53 (VGFL…ADGV), 56–76 (WWTL…GCVI), 105–125 (NALL…LTMN), 151–171 (LPQV…FAAI), 180–200 (WLLY…YAMV), 214–234 (AILF…LMLL), 247–267 (HTYW…FIIA), and 278–298 (AFMH…LATT).

This sequence belongs to the UbiA prenyltransferase family. Requires Mg(2+) as cofactor.

The protein localises to the cell inner membrane. It carries out the reaction all-trans-octaprenyl diphosphate + 4-hydroxybenzoate = 4-hydroxy-3-(all-trans-octaprenyl)benzoate + diphosphate. It functions in the pathway cofactor biosynthesis; ubiquinone biosynthesis. Catalyzes the prenylation of para-hydroxybenzoate (PHB) with an all-trans polyprenyl group. Mediates the second step in the final reaction sequence of ubiquinone-8 (UQ-8) biosynthesis, which is the condensation of the polyisoprenoid side chain with PHB, generating the first membrane-bound Q intermediate 3-octaprenyl-4-hydroxybenzoate. This Xylella fastidiosa (strain M23) protein is 4-hydroxybenzoate octaprenyltransferase.